A 563-amino-acid chain; its full sequence is MSEITLGKYLFERLSQVNCNTVFGLPGDFNLSLLDKLYEVKGMRWAGNANELNAAYAADGYARIKGMSCIITTFGVGELSALNGIAGSYAEHVGVLHVVGVPSISSQAKQLLLHHTLGNGDFTVFHRMSANISETTAMITDIANAPAEIDRCIRTTYTTQRPVYLGLPANLVDLNVPAKLLETPIDLSLKPNDAEAEAEVVRTVVELIKDAKNPVILADACASRHDVKAETKKLMDLTQFPVYVTPMGKGAIDEQHPRYGGVYVGTLSRPEVKKAVESADLILSIGALLSDFNTGSFSYSYKTKNIVEFHSDHIKIRNATFPGVQMKFALQKLLDAIPEVVKDYKPVAVPARVPITKSTPANTPMKQEWMWNHLGNFLREGDIVIAETGTSAFGINQTTFPTDVYAIVQVLWGSIGFTVGALLGATMAAEELDPKKRVILFIGDGSLQLTVQEISTMIRWGLKPYIFVLNNNGYTIEKLIHGPHAEYNEIQGWDHLALLPTFGARNYETHRVATTGEWEKLTQDKDFQDNSKIRMIEVMLPVFDAPQNLVKQAQLTAATNAKQ.

Pyruvate contacts are provided by D28, H115, Y157, and R224. Thiamine diphosphate is bound by residues T390 and 413–415 (GSI). Residue D444 participates in Mg(2+) binding. Residues 445 to 446 (GS) and 471 to 476 (NNGYTI) contribute to the thiamine diphosphate site. Positions 471 and 473 each coordinate Mg(2+). E477 contacts pyruvate.

It belongs to the TPP enzyme family. In terms of assembly, homotetramer. It depends on Mg(2+) as a cofactor. Requires thiamine diphosphate as cofactor.

The protein localises to the cytoplasm. Its subcellular location is the nucleus. The catalysed reaction is pyruvate + H(+) = acetaldehyde + CO2. It catalyses the reaction 3-methyl-2-oxobutanoate + H(+) = 2-methylpropanal + CO2. The enzyme catalyses (S)-3-methyl-2-oxopentanoate + H(+) = 2-methylbutanal + CO2. It carries out the reaction indole-3-pyruvate + H(+) = indole-3-acetaldehyde + CO2. The catalysed reaction is 3-phenylpyruvate + H(+) = 2-phenylacetaldehyde + CO2. It catalyses the reaction 2-oxobutanoate + H(+) = propanal + CO2. The enzyme catalyses 2-oxopentanoate + H(+) = butanal + CO2. It carries out the reaction 2 acetaldehyde = acetoin. The catalysed reaction is acetaldehyde + pyruvate + H(+) = acetoin + CO2. The protein operates within fermentation; ethanol fermentation. It functions in the pathway amino-acid degradation; Ehrlich pathway. Its activity is regulated as follows. Allosterically activated by its substrate, pyruvate. Second most abundant of three pyruvate decarboxylases (PDC1, PDC5, PDC6) implicated in the nonoxidative conversion of pyruvate to acetaldehyde and carbon dioxide during alcoholic fermentation. Most of the produced acetaldehyde is subsequently reduced to ethanol, but some is required for cytosolic acetyl-CoA production for biosynthetic pathways. The enzyme is also one of five 2-oxo acid decarboxylases (PDC1, PDC5, PDC6, ARO10, and THI3) able to decarboxylate more complex 2-oxo acids (alpha-keto-acids) than pyruvate, which seem mainly involved in amino acid catabolism. Here the enzyme catalyzes the decarboxylation of amino acids, which, in a first step, have been transaminated to the corresponding 2-oxo acids. In a third step, the resulting aldehydes are reduced to alcohols, collectively referred to as fusel oils or alcohols. Its preferred substrates are the transaminated amino acids derived from threonine (2-oxobutanoate), norvaline (2-oxopentanoate), valine (3-methyl-2-oxobutanoate, also alpha-keto-isovalerate), isoleucine ((3S)-3-methyl-2-oxopentanoate, also alpha-keto-beta-methylvalerate), phenylalanine (phenylpyruvate), and tryptophan (3-(indol-3-yl)pyruvate), whereas transaminated leucine is no substrate. In a side-reaction the carbanionic intermediate (or active aldehyde) generated by decarboxylation or by activation of an aldehyde can react with an aldehyde via condensation (or carboligation) yielding a 2-hydroxy ketone, collectively called acyloins. The polypeptide is Pyruvate decarboxylase isozyme 2 (PDC5) (Saccharomyces cerevisiae (strain ATCC 204508 / S288c) (Baker's yeast)).